A 278-amino-acid polypeptide reads, in one-letter code: Large ribosomal subunit protein uL2 (278 aa).

2 disordered regions span residues Met1 to His58 and Val224 to Arg278. The span at Glu23–Leu33 shows a compositional bias: basic and acidic residues. Basic residues predominate over residues Leu37–His58. Residues Pro253–Ile268 show a composition bias toward basic and acidic residues. Basic residues predominate over residues Val269 to Arg278.

It belongs to the universal ribosomal protein uL2 family. Part of the 50S ribosomal subunit. Forms a bridge to the 30S subunit in the 70S ribosome.

Its function is as follows. One of the primary rRNA binding proteins. Required for association of the 30S and 50S subunits to form the 70S ribosome, for tRNA binding and peptide bond formation. It has been suggested to have peptidyltransferase activity; this is somewhat controversial. Makes several contacts with the 16S rRNA in the 70S ribosome. In Mycolicibacterium vanbaalenii (strain DSM 7251 / JCM 13017 / BCRC 16820 / KCTC 9966 / NRRL B-24157 / PYR-1) (Mycobacterium vanbaalenii), this protein is Large ribosomal subunit protein uL2.